The following is a 108-amino-acid chain: UPF0145 protein Tery_3795 (108 aa).

It belongs to the UPF0145 family.

The polypeptide is UPF0145 protein Tery_3795 (Trichodesmium erythraeum (strain IMS101)).